The chain runs to 301 residues: Rhodopsin (301 aa).

Over 1-18 (LHMIHLHWYQYPPMNPMM) the chain is Extracellular. The helical transmembrane segment at 19-43 (YPLLLIFMLFTGILCLAGNFVTIWV) threads the bilayer. Residues 44-55 (FMNTKSLRTPAN) are Cytoplasmic-facing. A helical transmembrane segment spans residues 56 to 78 (LLVVNLAMSDFLMMFTMFPPMMV). The Extracellular segment spans residues 79 to 92 (TCYYHTWTLGPTFC). C92 and C169 are joined by a disulfide. Residues 93–115 (QVYAFLGNLCGCASIWTMVFITF) traverse the membrane as a helical segment. The 'Ionic lock' involved in activated form stabilization motif lies at 116-118 (DRY). The Cytoplasmic portion of the chain corresponds to 116–134 (DRYNVIVKGVAGEPLSTKK). Residues 135–155 (ASLWILSVWVLSTAWCIAPFF) form a helical membrane-spanning segment. Over 156–182 (GWNHYVPEGNLTGCGTDYLSEDILSRS) the chain is Extracellular. N-linked (GlcNAc...) asparagine glycosylation is present at N165. A helical transmembrane segment spans residues 183–204 (YLYIYSTWVYFLPLAITIYCYV). Over 205–245 (FIIKAVAAHEKGMRDQAKKMGIKSLRNEEAQKTSAECRLAK) the chain is Cytoplasmic. Residues 246–267 (NAMTTVALWFIAWTPCLLINWV) traverse the membrane as a helical segment. Topologically, residues 268–278 (GMFARSYLSPV) are extracellular. The helical transmembrane segment at 279-300 (YTIWGYVFAKANAVYNPIVYAI) threads the bilayer. At K288 the chain carries N6-(retinylidene)lysine.

It belongs to the G-protein coupled receptor 1 family. Opsin subfamily. In terms of assembly, homodimer. Interacts with GNAQ. Post-translationally, contains one covalently linked retinal chromophore.

It localises to the cell projection. The protein localises to the rhabdomere membrane. Photoreceptor required for image-forming vision at low light intensity. Can use both retinal and 3-dehydroretinal as visual pigment. Light-induced isomerization of 11-cis to all-trans retinal triggers a conformational change that activates signaling via G-proteins. Signaling via GNAQ probably mediates the activation of phospholipase C. This chain is Rhodopsin (RHO), found in Cambarus hubrichti (Salem cave crayfish).